The sequence spans 557 residues: Glucose-6-phosphate isomerase (557 aa).

The active-site Proton donor is the Glu361. Catalysis depends on residues His392 and Lys520.

It belongs to the GPI family.

It is found in the cytoplasm. It catalyses the reaction alpha-D-glucose 6-phosphate = beta-D-fructose 6-phosphate. It functions in the pathway carbohydrate biosynthesis; gluconeogenesis. It participates in carbohydrate degradation; glycolysis; D-glyceraldehyde 3-phosphate and glycerone phosphate from D-glucose: step 2/4. Its function is as follows. Catalyzes the reversible isomerization of glucose-6-phosphate to fructose-6-phosphate. The protein is Glucose-6-phosphate isomerase of Acinetobacter baylyi (strain ATCC 33305 / BD413 / ADP1).